Consider the following 257-residue polypeptide: MLLAIDCGNTNTVFSIWDGTQFLATWRIATDHKRTADEYHVWLSTLLSLTRIEARITEAVISSTVPRVVFNLRVLCNRYYDCRPLVVGKPECRLPVAPRVDQGTTVGPDRLVNTVAGYHLHGGNLIVVDFGTATTFDVVDADGAYIGGVIAPGVNLSLEALHMAAAALPHVDVTKPPHAIGTNTVACIQSGVYWGYIGLVEGIVRQIRLERHAPMKVIATGGLAPLFDQGFDLFDKVEDDLTMQGLVLIHQYNKELE.

Aspartate 6–valine 13 is an ATP binding site. Residue glycine 107–arginine 110 participates in substrate binding. Aspartate 109 (proton acceptor) is an active-site residue. Aspartate 129 is a binding site for K(+). Threonine 132 contacts ATP. Threonine 184 serves as a coordination point for substrate.

It belongs to the type III pantothenate kinase family. In terms of assembly, homodimer. NH4(+) serves as cofactor. K(+) is required as a cofactor.

It localises to the cytoplasm. The enzyme catalyses (R)-pantothenate + ATP = (R)-4'-phosphopantothenate + ADP + H(+). Its pathway is cofactor biosynthesis; coenzyme A biosynthesis; CoA from (R)-pantothenate: step 1/5. Functionally, catalyzes the phosphorylation of pantothenate (Pan), the first step in CoA biosynthesis. The polypeptide is Type III pantothenate kinase (Cereibacter sphaeroides (strain ATCC 17025 / ATH 2.4.3) (Rhodobacter sphaeroides)).